The sequence spans 234 residues: Immune-associated nucleotide-binding protein 2 (234 aa).

The region spanning 21-223 is the AIG1-type G domain; sequence KPVKNIVLVG…YTEDMYRNIK (203 aa). GTP is bound by residues 30-38, serine 51, and asparagine 183; that span reads GRSVNGICT.

This sequence belongs to the TRAFAC class TrmE-Era-EngA-EngB-Septin-like GTPase superfamily. AIG1/Toc34/Toc159-like paraseptin GTPase family. IAN subfamily. Mostly expressed in pollen. Also detected in lateral roots and radicles.

This Arabidopsis thaliana (Mouse-ear cress) protein is Immune-associated nucleotide-binding protein 2.